The primary structure comprises 663 residues: Zinc finger protein GLI2 (663 aa).

A disordered region spans residues 159–186 (ISSNSNCISDSSQSKQSSESAVSSTVNP). The span at 160 to 182 (SSNSNCISDSSQSKQSSESAVSS) shows a compositional bias: low complexity. 5 consecutive C2H2-type zinc fingers follow at residues 234 to 259 (TNCH…NNDH), 267 to 294 (FVCR…MRRH), 300 to 324 (HKCT…LRSH), 330 to 355 (YVCE…NRTH), and 361 to 386 (YVCK…KTVH). Disordered stretches follow at residues 374–440 (DPSS…MEDC), 452–481 (VMCQ…DSGV), 544–578 (CSWV…SRTL), and 619–663 (SGIS…DIKL). Residues 386-402 (HGPDAHVTKKQRNDVHP) show a composition bias toward basic and acidic residues. The segment covering 456–473 (SSPGGQSSCSSEPSPLGS) has biased composition (low complexity). Polar residues-rich tracts occupy residues 563–578 (GNGS…SRTL) and 619–647 (SGIS…SSAD).

The protein belongs to the GLI C2H2-type zinc-finger protein family.

Its subcellular location is the nucleus. It localises to the cytoplasm. It is found in the cell projection. The protein resides in the cilium. Functions as a transcription regulator in the hedgehog (Hh) pathway. Functions as a transcriptional activator. May also function as transcriptional repressor. Binds to the DNA sequence 5'-GAACCACCCA-3'. Is involved in the smoothened (SHH) signaling pathway. Required for normal skeleton development. The chain is Zinc finger protein GLI2 from Gallus gallus (Chicken).